Reading from the N-terminus, the 293-residue chain is Foldase protein PrsA 2 (293 aa).

Residues 1–20 (MKKKLILGLVMMMALFSLAA) form the signal peptide. A lipid anchor (N-palmitoyl cysteine) is attached at Cys21. Cys21 carries the S-diacylglycerol cysteine lipid modification. The PpiC domain occupies 135-226 (QPDITVSHIL…YGYHIIQMDK (92 aa)).

The protein belongs to the PrsA family.

The protein localises to the cell membrane. It catalyses the reaction [protein]-peptidylproline (omega=180) = [protein]-peptidylproline (omega=0). Plays a major role in protein secretion by helping the post-translocational extracellular folding of several secreted proteins. The sequence is that of Foldase protein PrsA 2 from Listeria monocytogenes serotype 4b (strain F2365).